Here is a 151-residue protein sequence, read N- to C-terminus: Large ribosomal subunit protein bL9 (151 aa).

Belongs to the bacterial ribosomal protein bL9 family.

Functionally, binds to the 23S rRNA. The sequence is that of Large ribosomal subunit protein bL9 from Francisella tularensis subsp. tularensis (strain FSC 198).